The sequence spans 89 residues: Small ribosomal subunit protein uS15 (89 aa).

This sequence belongs to the universal ribosomal protein uS15 family. Part of the 30S ribosomal subunit. Forms a bridge to the 50S subunit in the 70S ribosome, contacting the 23S rRNA.

Its function is as follows. One of the primary rRNA binding proteins, it binds directly to 16S rRNA where it helps nucleate assembly of the platform of the 30S subunit by binding and bridging several RNA helices of the 16S rRNA. In terms of biological role, forms an intersubunit bridge (bridge B4) with the 23S rRNA of the 50S subunit in the ribosome. This chain is Small ribosomal subunit protein uS15, found in Prosthecochloris aestuarii (strain DSM 271 / SK 413).